A 933-amino-acid chain; its full sequence is Isoleucine--tRNA ligase (933 aa).

The 'HIGH' region motif lies at 57-67 (PYANGNIHVGH). L-isoleucyl-5'-AMP is bound at residue glutamate 554. The 'KMSKS' region motif lies at 595-599 (KMSKS). Residue lysine 598 coordinates ATP.

This sequence belongs to the class-I aminoacyl-tRNA synthetase family. IleS type 1 subfamily. In terms of assembly, monomer.

It localises to the cytoplasm. The catalysed reaction is tRNA(Ile) + L-isoleucine + ATP = L-isoleucyl-tRNA(Ile) + AMP + diphosphate. In terms of biological role, catalyzes the attachment of isoleucine to tRNA(Ile). As IleRS can inadvertently accommodate and process structurally similar amino acids such as valine, to avoid such errors it has two additional distinct tRNA(Ile)-dependent editing activities. One activity is designated as 'pretransfer' editing and involves the hydrolysis of activated Val-AMP. The other activity is designated 'posttransfer' editing and involves deacylation of mischarged Val-tRNA(Ile). This chain is Isoleucine--tRNA ligase, found in Streptococcus pyogenes serotype M18 (strain MGAS8232).